The chain runs to 151 residues: Transcriptional repressor NrdR (151 aa).

Positions 1 to 24 are disordered; it reads MRCPKCQHNGTRVLDSRPSDESRS. A zinc finger lies at 3-34; sequence CPKCQHNGTRVLDSRPSDESRSIKRRRECEKC. Residues 14–24 show a composition bias toward basic and acidic residues; sequence LDSRPSDESRS. In terms of domain architecture, ATP-cone spans 49-139; the sequence is LLIIKKDGMR…VYRQFKDINV (91 aa).

The protein belongs to the NrdR family. The cofactor is Zn(2+).

Its function is as follows. Negatively regulates transcription of bacterial ribonucleotide reductase nrd genes and operons by binding to NrdR-boxes. The sequence is that of Transcriptional repressor NrdR from Shouchella clausii (strain KSM-K16) (Alkalihalobacillus clausii).